The sequence spans 342 residues: N-acetyl-gamma-glutamyl-phosphate reductase (342 aa).

Residue Cys-147 is part of the active site.

The protein belongs to the NAGSA dehydrogenase family. Type 1 subfamily.

It localises to the cytoplasm. The catalysed reaction is N-acetyl-L-glutamate 5-semialdehyde + phosphate + NADP(+) = N-acetyl-L-glutamyl 5-phosphate + NADPH + H(+). It functions in the pathway amino-acid biosynthesis; L-arginine biosynthesis; N(2)-acetyl-L-ornithine from L-glutamate: step 3/4. Functionally, catalyzes the NADPH-dependent reduction of N-acetyl-5-glutamyl phosphate to yield N-acetyl-L-glutamate 5-semialdehyde. This Campylobacter jejuni subsp. doylei (strain ATCC BAA-1458 / RM4099 / 269.97) protein is N-acetyl-gamma-glutamyl-phosphate reductase.